Here is an 835-residue protein sequence, read N- to C-terminus: Lon protease (835 aa).

A Lon N-terminal domain is found at 36 to 234 (VHVFPLLRRP…KALILLKKEL (199 aa)). An ATP-binding site is contributed by 387-394 (GPPGVGKT). The region spanning 646-828 (RTPVGVCMGL…DQVFKISFPN (183 aa)) is the Lon proteolytic domain. Catalysis depends on residues Ser734 and Lys777.

This sequence belongs to the peptidase S16 family. As to quaternary structure, homohexamer. Organized in a ring with a central cavity.

The protein resides in the cytoplasm. It catalyses the reaction Hydrolysis of proteins in presence of ATP.. Its function is as follows. ATP-dependent serine protease that mediates the selective degradation of mutant and abnormal proteins as well as certain short-lived regulatory proteins. Required for cellular homeostasis and for survival from DNA damage and developmental changes induced by stress. Degrades polypeptides processively to yield small peptide fragments that are 5 to 10 amino acids long. Binds to DNA in a double-stranded, site-specific manner. The protein is Lon protease of Protochlamydia amoebophila (strain UWE25).